Consider the following 211-residue polypeptide: Ribosomal RNA small subunit methyltransferase G (211 aa).

S-adenosyl-L-methionine contacts are provided by residues glycine 73, isoleucine 126–glutamate 127, and arginine 142.

Belongs to the methyltransferase superfamily. RNA methyltransferase RsmG family.

Its subcellular location is the cytoplasm. It carries out the reaction guanosine(527) in 16S rRNA + S-adenosyl-L-methionine = N(7)-methylguanosine(527) in 16S rRNA + S-adenosyl-L-homocysteine. Its function is as follows. Specifically methylates the N7 position of guanine in position 527 of 16S rRNA. This is Ribosomal RNA small subunit methyltransferase G from Methylorubrum extorquens (strain CM4 / NCIMB 13688) (Methylobacterium extorquens).